Consider the following 273-residue polypeptide: Ribosomal RNA small subunit methyltransferase A (273 aa).

The S-adenosyl-L-methionine site is built by asparagine 18, leucine 20, glycine 45, glutamate 66, aspartate 91, and asparagine 113.

It belongs to the class I-like SAM-binding methyltransferase superfamily. rRNA adenine N(6)-methyltransferase family. RsmA subfamily.

Its subcellular location is the cytoplasm. The enzyme catalyses adenosine(1518)/adenosine(1519) in 16S rRNA + 4 S-adenosyl-L-methionine = N(6)-dimethyladenosine(1518)/N(6)-dimethyladenosine(1519) in 16S rRNA + 4 S-adenosyl-L-homocysteine + 4 H(+). Its function is as follows. Specifically dimethylates two adjacent adenosines (A1518 and A1519) in the loop of a conserved hairpin near the 3'-end of 16S rRNA in the 30S particle. May play a critical role in biogenesis of 30S subunits. This Klebsiella pneumoniae subsp. pneumoniae (strain ATCC 700721 / MGH 78578) protein is Ribosomal RNA small subunit methyltransferase A.